Here is a 433-residue protein sequence, read N- to C-terminus: Enolase (433 aa).

Gln-167 contacts (2R)-2-phosphoglycerate. Glu-209 acts as the Proton donor in catalysis. Mg(2+) contacts are provided by Asp-246, Glu-291, and Asp-318. (2R)-2-phosphoglycerate contacts are provided by Lys-343, Arg-372, Ser-373, and Lys-394. Catalysis depends on Lys-343, which acts as the Proton acceptor.

The protein belongs to the enolase family. In terms of assembly, component of the RNA degradosome, a multiprotein complex involved in RNA processing and mRNA degradation. It depends on Mg(2+) as a cofactor.

The protein resides in the cytoplasm. Its subcellular location is the secreted. It is found in the cell surface. The enzyme catalyses (2R)-2-phosphoglycerate = phosphoenolpyruvate + H2O. Its pathway is carbohydrate degradation; glycolysis; pyruvate from D-glyceraldehyde 3-phosphate: step 4/5. Catalyzes the reversible conversion of 2-phosphoglycerate (2-PG) into phosphoenolpyruvate (PEP). It is essential for the degradation of carbohydrates via glycolysis. The sequence is that of Enolase from Histophilus somni (strain 129Pt) (Haemophilus somnus).